Consider the following 261-residue polypeptide: MASPDWGYDGENGPEHWCKLHPIANGNNQSPIDIKTSETKRDPSLKPLSISYNPATAKEIVNVGHSFHVNFEDSDNRSVLKGGPLPESYRLRQFHFHWGSTDDCGSEHLVDGATFSAELHLVHWNSAKYPSFADAASQADGLVVVGVLMKVGQANPNLQKVLDALKTVKTKNKKAPFTNFDPSVLLPSCPDYWAYFGSLTHPPLHESVTWIIFKETISVSAEQLAQFRSLLANAEGDKEVCIKQNYRPPQPLKGRTVKASF.

At Ala2 the chain carries N-acetylalanine. In terms of domain architecture, Alpha-carbonic anhydrase spans 4-261 (PDWGYDGENG…LKGRTVKASF (258 aa)). A disordered region spans residues 22 to 41 (PIANGNNQSPIDIKTSETKR). The active-site Proton donor/acceptor is the His65. Positions 95, 97, and 120 each coordinate Zn(2+). Residues Thr200 and 200–201 (TH) contribute to the substrate site.

This sequence belongs to the alpha-carbonic anhydrase family. Zn(2+) serves as cofactor.

The protein localises to the cytoplasm. The catalysed reaction is hydrogencarbonate + H(+) = CO2 + H2O. The enzyme catalyses urea = cyanamide + H2O. With respect to regulation, inhibited by acetazolamide. Catalyzes the reversible hydration of carbon dioxide. Can hydrate cyanamide to urea. This chain is Carbonic anhydrase 1 (CA1), found in Ovis aries (Sheep).